A 65-amino-acid polypeptide reads, in one-letter code: Large ribosomal subunit protein bL35 (65 aa).

Basic residues predominate over residues 1–11 (MPKIKTRRSAA). Disordered regions lie at residues 1–24 (MPKIKTRRSAAKRFSVTGSGKFKR) and 41–65 (RMRLGQSATVDSTNEKAVRRMMPYA).

The protein belongs to the bacterial ribosomal protein bL35 family.

This chain is Large ribosomal subunit protein bL35, found in Nitratidesulfovibrio vulgaris (strain DSM 19637 / Miyazaki F) (Desulfovibrio vulgaris).